The chain runs to 963 residues: Thrombospondin-4 (963 aa).

Residues 1–26 (MPAPRAAAAAFLLLHLVLQPWQRTSA) form the signal peptide. Residues 29 to 194 (TPQVFDLLPS…LEELKLVVRG (166 aa)) form the Laminin G-like domain. Residues 138–140 (RGD) carry the Cell attachment site motif. In terms of domain architecture, EGF-like 1 spans 288 to 327 (PTRHCDSSPCFRGVRCTDTRDGFQCGPCPDGYTGNGITCS). Disulfide bonds link Cys-292-Cys-303, Cys-297-Cys-312, Cys-315-Cys-326, Cys-332-Cys-343, Cys-337-Cys-352, Cys-355-Cys-379, Cys-385-Cys-396, Cys-390-Cys-405, Cys-408-Cys-420, Cys-426-Cys-440, Cys-434-Cys-450, Cys-452-Cys-463, Cys-479-Cys-484, Cys-489-Cys-509, Cys-525-Cys-545, Cys-548-Cys-568, Cys-584-Cys-604, Cys-607-Cys-627, Cys-645-Cys-665, Cys-685-Cys-705, and Cys-721-Cys-942. The EGF-like 2; calcium-binding domain maps to 328–365 (DVDECKYHPCYPGVRCVNLAPGFRCDACPVGFTGPMVQ). An EGF-like 3; calcium-binding domain is found at 381–418 (DVDECQNGACVLNSICINTLGSYRCGPCKPGYTGDQTR). The EGF-like 4 domain maps to 422–464 (TERSCRNPEQNPCSVHAQCIEERQGDVTCVCGVGWAGDGYVCG). TSP type-3 repeat units follow at residues 465 to 497 (KDVD…NSGQ), 498 to 533 (EDAD…NIDQ), 534 to 556 (RNSD…NNDQ), 557 to 592 (KDTD…NRDQ), 593 to 615 (QDRD…NPNQ), 616 to 653 (SDVD…NSSQ), 654 to 693 (LDTD…NPAQ), and 694 to 729 (EDSN…EITL). Positions 564–566 (RGD) match the Cell attachment site motif. Positions 579-676 (NILDNCPRVP…DDDDNDGIPD (98 aa)) are disordered. Residues Asn-614 and Asn-650 are each glycosylated (N-linked (GlcNAc...) asparagine). Residues 642–654 (TDNCPTVINSSQL) show a composition bias toward polar residues. Over residues 662-673 (GDECDDDDDNDG) the composition is skewed to acidic residues. One can recognise a TSP C-terminal domain in the interval 733 to 947 (RAYQTVVLDP…LKYRCNDTIP (215 aa)). An N-linked (GlcNAc...) asparagine glycan is attached at Asn-943.

Belongs to the thrombospondin family. Homopentamer; disulfide-linked. Interacts with PTBP3. Interacts (via EGF-like 3; calcium-binding domain) with ATF6 and facilitates its processing, activation and nuclear translocation. Interacts with NOTCH1. Heart. Up-regulated in the heart in response to ischemic injury and pathology (at protein level). Astrocytes; expressed at high levels in subventricular zone (SVZ)-derived astrocytes and at low levels in cortical astrocytes. In response to peripheral nerve injury, significantly up-regulated in the dorsal spinal cord (at protein level).

Its subcellular location is the endoplasmic reticulum. It localises to the sarcoplasmic reticulum. It is found in the secreted. The protein localises to the extracellular space. The protein resides in the extracellular matrix. In terms of biological role, adhesive glycoprotein that mediates cell-to-cell and cell-to-matrix interactions and is involved in various processes including cellular proliferation, migration, adhesion and attachment, inflammatory response to CNS injury, regulation of vascular inflammation and adaptive responses of the heart to pressure overload and in myocardial function and remodeling. Binds to structural extracellular matrix (ECM) proteins and modulates the ECM in response to tissue damage, contributing to cardioprotective and adaptive ECM remodeling. Plays a role in ER stress response, via its interaction with the activating transcription factor 6 alpha (ATF6) which produces adaptive ER stress response factors and protects myocardium from pressure overload. May contribute to spinal presynaptic hypersensitivity and neuropathic pain states after peripheral nerve injury. May play a role in regulating protective astrogenesis from the subventricular zone (SVZ) niche after injury in a NOTCH1-dependent manner. The chain is Thrombospondin-4 (Thbs4) from Mus musculus (Mouse).